Reading from the N-terminus, the 366-residue chain is DNA replication and repair protein RecF (366 aa).

Position 30–37 (30–37) interacts with ATP; sequence GDNGMGKT.

Belongs to the RecF family.

The protein localises to the cytoplasm. The RecF protein is involved in DNA metabolism; it is required for DNA replication and normal SOS inducibility. RecF binds preferentially to single-stranded, linear DNA. It also seems to bind ATP. The protein is DNA replication and repair protein RecF of Azobacteroides pseudotrichonymphae genomovar. CFP2.